The sequence spans 202 residues: N-(5'-phosphoribosyl)anthranilate isomerase (202 aa).

Belongs to the TrpF family.

It carries out the reaction N-(5-phospho-beta-D-ribosyl)anthranilate = 1-(2-carboxyphenylamino)-1-deoxy-D-ribulose 5-phosphate. It participates in amino-acid biosynthesis; L-tryptophan biosynthesis; L-tryptophan from chorismate: step 3/5. The polypeptide is N-(5'-phosphoribosyl)anthranilate isomerase (Listeria monocytogenes serotype 4b (strain CLIP80459)).